We begin with the raw amino-acid sequence, 438 residues long: Ammonium transporter Rh type A (438 aa).

Topologically, residues 1-4 (MRFK) are cytoplasmic. The helical transmembrane segment at 5–25 (FPLMAISLEVAMIVLFGLFVE) threads the bilayer. Residues 26–61 (YETPQNASQKNASHQNASQQGNTSSSAKKDQFFQLY) lie on the Extracellular side of the membrane. N-linked (GlcNAc...) asparagine glycosylation is found at Asn31, Asn36, Asn41, and Asn47. A helical transmembrane segment spans residues 62–82 (PLFQDVHVMIFVGFGFLMTFL). The Cytoplasmic portion of the chain corresponds to 83–86 (KKYG). The chain crosses the membrane as a helical span at residues 87–107 (FSGVGFNLFLAALGLQWGTIM). Residues 108 to 121 (QGLLHSHGKEFHFG) lie on the Extracellular side of the membrane. Residues 122–142 (IYNMINADFSTATVLISFGAV) traverse the membrane as a helical segment. Residues 143–148 (LGKTSP) lie on the Cytoplasmic side of the membrane. A helical membrane pass occupies residues 149 to 169 (IQMLIMTILEIAVFAGNEYLV). Residues 170–178 (TELFEASDT) lie on the Extracellular side of the membrane. The chain crosses the membrane as a helical span at residues 179–199 (GASMTIHAFGAYFGLAVAGVL). Topologically, residues 200-218 (YRPGLRCEHPNDESVYHSD) are cytoplasmic. Residues 219-239 (LFAMIGTLFLWIFWPSFNSAI) form a helical membrane-spanning segment. Residues 240-249 (ADPGDHQYRA) are Extracellular-facing. Residues 250–270 (IVNTYMSLAACVITAYALSSL) traverse the membrane as a helical segment. Topologically, residues 271–278 (VERRGRLD) are cytoplasmic. Residues 279–296 (MVHIQNATLAGGVAVGTC) form a helical membrane-spanning segment. Residues 297-300 (ADME) lie on the Extracellular side of the membrane. The chain crosses the membrane as a helical span at residues 301-321 (IPLYAAMTIGSIAGIISVLGY). At 322-342 (KFFSPLLANKLMIHDTCGVHN) the chain is on the cytoplasmic side. Residues 343–363 (LHGLPGVFGGLASIVAISWGM) traverse the membrane as a helical segment. Residues 364-372 (STASMAMQA) are Extracellular-facing. The helical transmembrane segment at 373–393 (AALGSSIGSAIVGGLLTGLIL) threads the bilayer. At 394 to 438 (KLPIWNQPPDEYCYDDSVSWKVPKFRELDNRFFQHANHNHVEHEV) the chain is on the cytoplasmic side.

Belongs to the ammonium transporter (TC 2.A.49) family. Rh subfamily. As to quaternary structure, homodimer. Heterotrimer; a RHCE monomer interacts with a RHAG homodimer. Component of the ankyrin-1 complex in the erythrocyte, composed of ANK1, RHCE, RHAG, SLC4A1, EPB42, GYPA, GYPB and AQP1. Interacts with GYPB (via the N-terminal); this interaction bridges the (RHAG)2(RHCE) heterotrimer with the SLC4A1 Band 3 I dimer complexed with GYPA. In terms of processing, glycosylated.

Its subcellular location is the membrane. The enzyme catalyses methylamine(out) = methylamine(in). It catalyses the reaction NH4(+)(in) = NH4(+)(out). It carries out the reaction CO2(out) = CO2(in). Its function is as follows. Component of the ankyrin-1 complex, a multiprotein complex involved in the stability and shape of the erythrocyte membrane. Heterotrimer with RHCE (RHAG)2(RHCE), that transports ammonium and its related derivative methylammonium, in both neutral and ionic forms, across the erythrocyte membrane. The transport of NH4(+) is electrogenic and masks the NH3 transport. Also, may act as a CO2 channel. Moreover in erythrocyte, regulates RHD membrane expression and is associated with rhesus blood group antigen expression. In Mus musculus (Mouse), this protein is Ammonium transporter Rh type A.